The chain runs to 157 residues: S-ribosylhomocysteine lyase (157 aa).

Histidine 54, histidine 58, and cysteine 126 together coordinate Fe cation.

Belongs to the LuxS family. Homodimer. The cofactor is Fe cation.

It catalyses the reaction S-(5-deoxy-D-ribos-5-yl)-L-homocysteine = (S)-4,5-dihydroxypentane-2,3-dione + L-homocysteine. Involved in the synthesis of autoinducer 2 (AI-2) which is secreted by bacteria and is used to communicate both the cell density and the metabolic potential of the environment. The regulation of gene expression in response to changes in cell density is called quorum sensing. Catalyzes the transformation of S-ribosylhomocysteine (RHC) to homocysteine (HC) and 4,5-dihydroxy-2,3-pentadione (DPD). The protein is S-ribosylhomocysteine lyase of Bacillus cereus (strain 03BB102).